The sequence spans 195 residues: Putative manganese efflux pump MntP (195 aa).

The next 6 membrane-spanning stretches (helical) occupy residues isoleucine 4–methionine 24, phenylalanine 39–leucine 59, phenylalanine 64–methionine 84, isoleucine 120–threonine 140, isoleucine 145–alanine 165, and glycine 175–valine 195.

The protein belongs to the MntP (TC 9.B.29) family.

It is found in the cell membrane. Probably functions as a manganese efflux pump. This Syntrophomonas wolfei subsp. wolfei (strain DSM 2245B / Goettingen) protein is Putative manganese efflux pump MntP.